A 271-amino-acid polypeptide reads, in one-letter code: Chymotrypsin-like elastase family member 2A (271 aa).

The signal sequence occupies residues 1–16 (MIRTLLLSALVAGALS). Positions 17-30 (CGYPTYEVQHDVSR) are cleaved as a propeptide — activation peptide. Residues 31–269 (VVGGQEASPN…YIDWINSVIA (239 aa)) form the Peptidase S1 domain. A disulfide bridge links Cys-60 with Cys-76. Catalysis depends on charge relay system residues His-75 and Asp-123. Intrachain disulfides connect Cys-157–Cys-224, Cys-188–Cys-204, and Cys-214–Cys-245. Ser-218 acts as the Charge relay system in catalysis.

This sequence belongs to the peptidase S1 family. Elastase subfamily. As to quaternary structure, interacts with CPA1. Interacts with SERPINA1. As to expression, pancreas.

The protein localises to the secreted. It catalyses the reaction Preferential cleavage: Leu-|-Xaa, Met-|-Xaa and Phe-|-Xaa. Hydrolyzes elastin.. In terms of biological role, elastase that enhances insulin signaling and might have a physiologic role in cellular glucose metabolism. Circulates in plasma and reduces platelet hyperactivation, triggers both insulin secretion and degradation, and increases insulin sensitivity. The sequence is that of Chymotrypsin-like elastase family member 2A (Cela2a) from Rattus norvegicus (Rat).